Here is a 189-residue protein sequence, read N- to C-terminus: Group XIIA secretory phospholipase A2 (189 aa).

Residues 1 to 22 (MALLSRPALTLLLLLMAAVVRC) form the signal peptide. Ca(2+)-binding residues include glycine 88, proline 90, and phenylalanine 92. Residue histidine 110 is part of the active site. Aspartate 111 contributes to the Ca(2+) binding site. Aspartate 125 is an active-site residue.

Requires Ca(2+) as cofactor. Abundantly expressed in heart, skeletal muscle, kidney, liver and pancreas.

Its subcellular location is the secreted. It localises to the cytoplasm. The catalysed reaction is a 1,2-diacyl-sn-glycero-3-phosphocholine + H2O = a 1-acyl-sn-glycero-3-phosphocholine + a fatty acid + H(+). In terms of biological role, PA2 catalyzes the calcium-dependent hydrolysis of the 2-acyl groups in 3-sn-phosphoglycerides. Does not exhibit detectable activity toward sn-2-arachidonoyl- or linoleoyl-phosphatidylcholine or -phosphatidylethanolamine. The chain is Group XIIA secretory phospholipase A2 (PLA2G12A) from Homo sapiens (Human).